Consider the following 119-residue polypeptide: Early E3 13.3 kDa protein (119 aa).

The chain is Early E3 13.3 kDa protein from Canine adenovirus serotype 1 (strain Utrecht) (CAdV-1).